Here is a 295-residue protein sequence, read N- to C-terminus: Probable WRKY transcription factor 46 (295 aa).

The segment at residues 98–166 (QENGSIDDGH…YLGNHTCNNI (69 aa)) is a DNA-binding region (WRKY).

It belongs to the WRKY group III family. Binds to BZR2/BES1 to cooperatively regulate the expression of target genes. Phosphorylated and destabilized by ASK7/BIN2. As to expression, expressed in guard cells, hypocotyls, and in the vascular tissues of cotyledon and root. Mostly expressed in roots, at lower levels in leaves and petioles, and, to a lower extent, in stems, flowers and siliques.

The protein localises to the nucleus. Transcription factor involved in the regulation of osmotic stress responses and stomatal movement. Interacts specifically with the W box (5'-(T)TGAC[CT]-3'), a frequently occurring elicitor-responsive cis-acting element. Positive regulator of EDS1-dependent defense against E.amylovora. Together with WRKY70 and WRKY53, promotes resistance to P.syringae, probably by enhancing salicylic acid (SA)- dependent genes. Contributes to the suppression of jasmonic acid (MeJA)-induced expression of PDF1.2. Together with WRKY54 and WRKY70, promotes brassinosteroid (BR)-regulated plant growth but prevent drought response by modulating gene expression. This chain is Probable WRKY transcription factor 46 (WRKY46), found in Arabidopsis thaliana (Mouse-ear cress).